Here is a 64-residue protein sequence, read N- to C-terminus: Large ribosomal subunit protein eL37 (64 aa).

Zn(2+) contacts are provided by Cys-20, Cys-23, Cys-35, and Cys-38. The C4-type zinc finger occupies 20 to 38 (CRRCGRRAYHVRKKACAAC).

This sequence belongs to the eukaryotic ribosomal protein eL37 family. It depends on Zn(2+) as a cofactor.

Its function is as follows. Binds to the 23S rRNA. In Methanococcus vannielii (strain ATCC 35089 / DSM 1224 / JCM 13029 / OCM 148 / SB), this protein is Large ribosomal subunit protein eL37.